The sequence spans 1023 residues: 2-oxoglutarate dehydrogenase complex component E1 (1023 aa).

A mitochondrion-targeting transit peptide spans methionine 1–tyrosine 40. Position 74 is an N6-succinyllysine (lysine 74). Serine 100 bears the Phosphoserine mark. Ca(2+) contacts are provided by histidine 143, aspartate 156, and aspartate 158. A thiamine diphosphate-binding site is contributed by arginine 312. At lysine 401 the chain carries N6-acetyllysine. Residues aspartate 411, asparagine 444, and isoleucine 446 each coordinate thiamine diphosphate. Mg(2+)-binding residues include aspartate 411, asparagine 444, and isoleucine 446. Residue lysine 534 forms a Glycyl lysine isopeptide (Lys-Gly) (interchain with G-Cter in ubiquitin) linkage. Lysine 564 is subject to N6-succinyllysine. Glutamine 676 lines the thiamine diphosphate pocket. An N6-acetyllysine modification is found at lysine 970.

The protein belongs to the alpha-ketoglutarate dehydrogenase family. Homodimer. The 2-oxoglutarate dehydrogenase complex is composed of OGDH (2-oxoglutarate dehydrogenase; E1), DLST (dihydrolipoamide succinyltransferase; E2), DLD (dihydrolipoamide dehydrogenase; E3) and the assembly factor KGD4. It contains multiple copies of the three enzymatic components (E1, E2 and E3). In the nucleus, the 2-oxoglutarate dehydrogenase complex associates with KAT2A. Interacts with ABHD11; this interaction maintains the functional lipoylation of the 2-oxoglutarate dehydrogenase complex. Requires thiamine diphosphate as cofactor. The cofactor is Mg(2+).

It localises to the mitochondrion. The protein localises to the nucleus. It carries out the reaction N(6)-[(R)-lipoyl]-L-lysyl-[protein] + 2-oxoglutarate + H(+) = N(6)-[(R)-S(8)-succinyldihydrolipoyl]-L-lysyl-[protein] + CO2. Calcium ions and ADP stimulate, whereas ATP and NADH reduce catalytic activity. 2-oxoglutarate dehydrogenase (E1o) component of the 2-oxoglutarate dehydrogenase complex (OGDHC). Participates in the first step, rate limiting for the overall conversion of 2-oxoglutarate to succinyl-CoA and CO(2) catalyzed by the whole OGDHC. Catalyzes the irreversible decarboxylation of 2-oxoglutarate (alpha-ketoglutarate) via the thiamine diphosphate (ThDP) cofactor and subsequent transfer of the decarboxylated acyl intermediate on an oxidized dihydrolipoyl group that is covalently amidated to the E2 enzyme (dihydrolipoyllysine-residue succinyltransferase or DLST). Plays a key role in the Krebs (citric acid) cycle, which is a common pathway for oxidation of fuel molecules, including carbohydrates, fatty acids, and amino acids. Can catalyze the decarboxylation of 2-oxoadipate in vitro, but at a much lower rate than 2-oxoglutarate. Mainly active in the mitochondrion. A fraction of the 2-oxoglutarate dehydrogenase complex also localizes in the nucleus and is required for lysine succinylation of histones: associates with KAT2A on chromatin and provides succinyl-CoA to histone succinyltransferase KAT2A. This is 2-oxoglutarate dehydrogenase complex component E1 from Pongo abelii (Sumatran orangutan).